Here is a 450-residue protein sequence, read N- to C-terminus: MRKTLTSIRFLSDGIRVKDKWNSLISDLVVEPTNSTGPLSGTTYIVKDNIATSHGYTTAASKILSNYESPFNATIIDLLSSNGSKLIGKSNLDEFGMGSANYNSYFNKVTNPYDNTKVPGGSSGGSAASVAGKMCSFSIGTDTGGSVRLPASYCNVFGFKPTYGRISRWGVIPYAQTLDTVGIIGENVNIIKRVYDVLNKYDDKDPTCLPEEVRQKIPTTKKETLTIGVPHEFVLKELSADVRESWEYALSKICKLGHLVKPISIKTIKKALPSYYTLATAEAASNLSRYDSIRYGYNTNESVNSPIELIATNRSDGFGSEVQRRILLGNYTLSSDSGDHYLRATQIREELCAEFSSIFNNSHVLLQDEQSSDKVDLIMAPTSTSTAPTWDEFVSANEKNFLNSYVNDVLTVPASLAGIPAISVPVNGIGIQLMGQFGDDDLVLQLADQI.

Catalysis depends on charge relay system residues K47 and S122. The active-site Acyl-ester intermediate is S146.

The protein belongs to the amidase family. GatA subfamily. Subunit of the heterotrimeric GatFAB amidotransferase (AdT) complex, composed of A, B and F subunits.

The protein localises to the mitochondrion. The catalysed reaction is L-glutamyl-tRNA(Gln) + L-glutamine + ATP + H2O = L-glutaminyl-tRNA(Gln) + L-glutamate + ADP + phosphate + H(+). In terms of biological role, allows the formation of correctly charged Gln-tRNA(Gln) through the transamidation of misacylated Glu-tRNA(Gln) in the mitochondria. The reaction takes place in the presence of glutamine and ATP through an activated gamma-phospho-Glu-tRNA(Gln). The protein is Glutamyl-tRNA(Gln) amidotransferase subunit A, mitochondrial of Candida albicans (strain WO-1) (Yeast).